The following is a 461-amino-acid chain: Alpha-L-fucosidase (461 aa).

An N-terminal signal peptide occupies residues 1–18 (MKMIIIFFILLILNLIKS).

This sequence belongs to the glycosyl hydrolase 29 family.

It carries out the reaction an alpha-L-fucoside + H2O = L-fucose + an alcohol. Its function is as follows. Alpha-L-fucosidase is responsible for hydrolyzing the alpha-1,6-linked fucose joined to the reducing-end N-acetylglucosamine of the carbohydrate moieties of glycoproteins. The polypeptide is Alpha-L-fucosidase (alfA) (Dictyostelium discoideum (Social amoeba)).